Consider the following 733-residue polypeptide: Protein psiM (733 aa).

An N-terminal signal peptide occupies residues 1 to 26 (MKKINNNKIFVLFLTILLYLLNITTA). Residues asparagine 22, asparagine 65, and asparagine 96 are each glycosylated (N-linked (GlcNAc...) asparagine). Residues 27–672 (QKPVSINIKI…VCQKAALVST (646 aa)) are Extracellular-facing. A PA14 domain is found at 114-260 (NYDSDSGNYI…YDYCGVCNGD (147 aa)). Residues asparagine 277, asparagine 336, asparagine 379, asparagine 428, asparagine 471, asparagine 537, asparagine 573, and asparagine 641 are each glycosylated (N-linked (GlcNAc...) asparagine). Residues 673 to 693 (AVIASVVVVGAVVLGAAIFAG) form a helical membrane-spanning segment. Topologically, residues 694-733 (KKGYDAWKTSQGNVMAASQANPLYTQSSNGGENPLYNSPT) are cytoplasmic.

It belongs to the prespore-cell-inducing factor family.

Its subcellular location is the membrane. The protein is Protein psiM (psiM) of Dictyostelium discoideum (Social amoeba).